The chain runs to 414 residues: Ribulose bisphosphate carboxylase large chain (414 aa).

2 residues coordinate substrate: Asn-100 and Thr-150. Lys-152 (proton acceptor) is an active-site residue. Residue Lys-154 coordinates substrate. Mg(2+)-binding residues include Lys-178, Asp-180, and Glu-181. The residue at position 178 (Lys-178) is an N6-carboxylysine. Residue His-271 is the Proton acceptor of the active site. Arg-272, His-304, and Ser-356 together coordinate substrate.

The protein belongs to the RuBisCO large chain family. Type I subfamily. As to quaternary structure, heterohexadecamer of 8 large chains and 8 small chains; disulfide-linked. The disulfide link is formed within the large subunit homodimers. Requires Mg(2+) as cofactor. The disulfide bond which can form in the large chain dimeric partners within the hexadecamer appears to be associated with oxidative stress and protein turnover.

It is found in the plastid. The protein resides in the chloroplast. It carries out the reaction 2 (2R)-3-phosphoglycerate + 2 H(+) = D-ribulose 1,5-bisphosphate + CO2 + H2O. The catalysed reaction is D-ribulose 1,5-bisphosphate + O2 = 2-phosphoglycolate + (2R)-3-phosphoglycerate + 2 H(+). Its function is as follows. RuBisCO catalyzes two reactions: the carboxylation of D-ribulose 1,5-bisphosphate, the primary event in carbon dioxide fixation, as well as the oxidative fragmentation of the pentose substrate in the photorespiration process. Both reactions occur simultaneously and in competition at the same active site. The sequence is that of Ribulose bisphosphate carboxylase large chain (rbcL) from Blechnopsis orientalis (Fish fern).